The following is a 130-amino-acid chain: Small ribosomal subunit protein bS16 (130 aa).

Positions 80–130 (AGHTPKKERANMKKAQPGKKAVERAEEKAAKASAAAEAPAEAPAAEAAAEE) are disordered. A compositionally biased stretch (basic and acidic residues) spans 99 to 109 (KAVERAEEKAA). Residues 110 to 130 (KASAAAEAPAEAPAAEAAAEE) show a composition bias toward low complexity.

The protein belongs to the bacterial ribosomal protein bS16 family.

The polypeptide is Small ribosomal subunit protein bS16 (Jannaschia sp. (strain CCS1)).